We begin with the raw amino-acid sequence, 785 residues long: Protein kintoun (785 aa).

Basic and acidic residues-rich tracts occupy residues 622–638 (EHNE…RDTS) and 662–679 (HNIE…KEPK). 2 disordered regions span residues 622-698 (EHNE…DSHL) and 719-749 (KSSV…ASSN). The segment covering 681 to 695 (TSCTAESTSGQQPND) has biased composition (polar residues). Residues 728–737 (SDLDEDDMPD) show a composition bias toward acidic residues.

It belongs to the PIH1 family. Kintoun subfamily.

It is found in the cytoplasm. Its subcellular location is the dynein axonemal particle. In terms of biological role, required for cytoplasmic pre-assembly of axonemal dyneins, thereby playing a central role in motility in cilia and flagella. Involved in pre-assembly of dynein arm complexes in the cytoplasm before intraflagellar transport loads them for the ciliary compartment. This chain is Protein kintoun, found in Xenopus tropicalis (Western clawed frog).